The following is a 309-amino-acid chain: GATA transcription factor 25 (309 aa).

The disordered stretch occupies residues Met-1–Pro-35. Residues Ile-8–Ala-18 show a composition bias toward polar residues. Residues Pro-77 to Gly-112 form the Tify domain. Residues Arg-146–Ser-188 form the CCT domain. Polar residues predominate over residues Ser-187–Asp-202. Residues Ser-187 to Asp-207 form a disordered region. A GATA-type zinc finger spans residues Ala-208–Lys-267. Residues Glu-290 to His-309 are disordered. The span at Ser-293–His-309 shows a compositional bias: polar residues.

It belongs to the type IV zinc-finger family. Class C subfamily. In terms of tissue distribution, predominantly expressed in shoot apices, inflorescences and roots.

Its subcellular location is the nucleus. Its function is as follows. Transcriptional activator that specifically binds 5'-GATA-3' or 5'-GAT-3' motifs within gene promoters. This chain is GATA transcription factor 25 (GATA25), found in Arabidopsis thaliana (Mouse-ear cress).